A 941-amino-acid chain; its full sequence is Bifunctional uridylyltransferase/uridylyl-removing enzyme (941 aa).

Residues 1–372 (MAKHDLSDAT…RFAHRPRRIP (372 aa)) form a uridylyltransferase region. Residues 373–728 (GTPEFIEDRG…VRTHSFHAIT (356 aa)) are uridylyl-removing. The region spanning 489 to 611 (VDEHLIRSVG…VQSLDRLRML (123 aa)) is the HD domain. ACT domains follow at residues 729-810 (EITV…EVIA) and 840-919 (VIEI…LREQ). The disordered stretch occupies residues 916-941 (LREQMPSGIIAPAATKSPAAEKKARV).

Belongs to the GlnD family. Mg(2+) serves as cofactor.

It catalyses the reaction [protein-PII]-L-tyrosine + UTP = [protein-PII]-uridylyl-L-tyrosine + diphosphate. The catalysed reaction is [protein-PII]-uridylyl-L-tyrosine + H2O = [protein-PII]-L-tyrosine + UMP + H(+). Its activity is regulated as follows. Uridylyltransferase (UTase) activity is inhibited by glutamine, while glutamine activates uridylyl-removing (UR) activity. In terms of biological role, modifies, by uridylylation and deuridylylation, the PII regulatory proteins (GlnB and homologs), in response to the nitrogen status of the cell that GlnD senses through the glutamine level. Under low glutamine levels, catalyzes the conversion of the PII proteins and UTP to PII-UMP and PPi, while under higher glutamine levels, GlnD hydrolyzes PII-UMP to PII and UMP (deuridylylation). Thus, controls uridylylation state and activity of the PII proteins, and plays an important role in the regulation of nitrogen assimilation and metabolism. The polypeptide is Bifunctional uridylyltransferase/uridylyl-removing enzyme (Allorhizobium ampelinum (strain ATCC BAA-846 / DSM 112012 / S4) (Agrobacterium vitis (strain S4))).